We begin with the raw amino-acid sequence, 934 residues long: Bifunctional uridylyltransferase/uridylyl-removing enzyme (934 aa).

A uridylyltransferase region spans residues 1–379 (MSAHDLKLEE…TFSRRKRKLS (379 aa)). Residues 380-736 (DDGAFISENH…AKPHAFEAVT (357 aa)) form a uridylyl-removing region. Positions 496–613 (VDEHLLRCIA…IDFADTVQTM (118 aa)) constitute an HD domain. ACT domains lie at 737–818 (EITV…DMLA) and 848–931 (VIEV…RSPQ).

The protein belongs to the GlnD family. Requires Mg(2+) as cofactor.

It carries out the reaction [protein-PII]-L-tyrosine + UTP = [protein-PII]-uridylyl-L-tyrosine + diphosphate. The enzyme catalyses [protein-PII]-uridylyl-L-tyrosine + H2O = [protein-PII]-L-tyrosine + UMP + H(+). Uridylyltransferase (UTase) activity is inhibited by glutamine, while glutamine activates uridylyl-removing (UR) activity. Modifies, by uridylylation and deuridylylation, the PII regulatory proteins (GlnB and homologs), in response to the nitrogen status of the cell that GlnD senses through the glutamine level. Under low glutamine levels, catalyzes the conversion of the PII proteins and UTP to PII-UMP and PPi, while under higher glutamine levels, GlnD hydrolyzes PII-UMP to PII and UMP (deuridylylation). Thus, controls uridylylation state and activity of the PII proteins, and plays an important role in the regulation of nitrogen assimilation and metabolism. The polypeptide is Bifunctional uridylyltransferase/uridylyl-removing enzyme (Brucella abortus (strain S19)).